We begin with the raw amino-acid sequence, 135 residues long: D-ribose pyranase (135 aa).

H20 acts as the Proton donor in catalysis. Residues D28, H102, and Y124 to N126 contribute to the substrate site.

It belongs to the RbsD / FucU family. RbsD subfamily. In terms of assembly, homodecamer.

The protein resides in the cytoplasm. The catalysed reaction is beta-D-ribopyranose = beta-D-ribofuranose. It participates in carbohydrate metabolism; D-ribose degradation; D-ribose 5-phosphate from beta-D-ribopyranose: step 1/2. Catalyzes the interconversion of beta-pyran and beta-furan forms of D-ribose. The sequence is that of D-ribose pyranase from Thermotoga maritima (strain ATCC 43589 / DSM 3109 / JCM 10099 / NBRC 100826 / MSB8).